The primary structure comprises 1401 residues: DNA-directed RNA polymerase subunit beta' (1401 aa).

Positions 71, 73, 86, and 89 each coordinate Zn(2+). Positions 462, 464, and 466 each coordinate Mg(2+). Zn(2+) is bound by residues cysteine 810, cysteine 884, cysteine 891, and cysteine 894. Residues 1377–1401 (RRKGTGAESATPMLADMANDPAAAE) form a disordered region.

This sequence belongs to the RNA polymerase beta' chain family. As to quaternary structure, the RNAP catalytic core consists of 2 alpha, 1 beta, 1 beta' and 1 omega subunit. When a sigma factor is associated with the core the holoenzyme is formed, which can initiate transcription. Mg(2+) is required as a cofactor. Zn(2+) serves as cofactor.

It catalyses the reaction RNA(n) + a ribonucleoside 5'-triphosphate = RNA(n+1) + diphosphate. In terms of biological role, DNA-dependent RNA polymerase catalyzes the transcription of DNA into RNA using the four ribonucleoside triphosphates as substrates. The chain is DNA-directed RNA polymerase subunit beta' from Rhizobium meliloti (strain 1021) (Ensifer meliloti).